The chain runs to 139 residues: Transcription antitermination protein NusB (139 aa).

This sequence belongs to the NusB family.

Involved in transcription antitermination. Required for transcription of ribosomal RNA (rRNA) genes. Binds specifically to the boxA antiterminator sequence of the ribosomal RNA (rrn) operons. The chain is Transcription antitermination protein NusB from Natranaerobius thermophilus (strain ATCC BAA-1301 / DSM 18059 / JW/NM-WN-LF).